The primary structure comprises 327 residues: GTP 3',8-cyclase (327 aa).

Residues 21–233 (SYGRRIRKLR…AKIQQKYSLK (213 aa)) enclose the Radical SAM core domain. Arg30 contributes to the GTP binding site. [4Fe-4S] cluster contacts are provided by Cys37 and Cys41. Position 43 (Tyr43) interacts with S-adenosyl-L-methionine. Residue Cys44 coordinates [4Fe-4S] cluster. Residue Arg79 participates in GTP binding. Residue Gly83 coordinates S-adenosyl-L-methionine. Thr109 contributes to the GTP binding site. Ser133 lines the S-adenosyl-L-methionine pocket. A GTP-binding site is contributed by Lys169. Position 203 (Met203) interacts with S-adenosyl-L-methionine. The [4Fe-4S] cluster site is built by Cys265 and Cys268. Residue 270–272 (RWR) participates in GTP binding. A [4Fe-4S] cluster-binding site is contributed by Cys282.

Belongs to the radical SAM superfamily. MoaA family. As to quaternary structure, monomer and homodimer. It depends on [4Fe-4S] cluster as a cofactor.

The enzyme catalyses GTP + AH2 + S-adenosyl-L-methionine = (8S)-3',8-cyclo-7,8-dihydroguanosine 5'-triphosphate + 5'-deoxyadenosine + L-methionine + A + H(+). The protein operates within cofactor biosynthesis; molybdopterin biosynthesis. Catalyzes the cyclization of GTP to (8S)-3',8-cyclo-7,8-dihydroguanosine 5'-triphosphate. The sequence is that of GTP 3',8-cyclase from Synechocystis sp. (strain ATCC 27184 / PCC 6803 / Kazusa).